The chain runs to 306 residues: D-alanine--D-alanine ligase (306 aa).

Residues 100-295 form the ATP-grasp domain; the sequence is KQIFRRAGLP…FGQLLERLME (196 aa). Position 127–180 (127–180) interacts with ATP; it reads RLPYPLFVKSNTGGSSLRLGRARNRAELDDIMGQIFAAGEEVIMEPVLPGREVT. Asp249, Glu262, and Asn264 together coordinate Mg(2+).

This sequence belongs to the D-alanine--D-alanine ligase family. It depends on Mg(2+) as a cofactor. Mn(2+) is required as a cofactor.

It localises to the cytoplasm. The catalysed reaction is 2 D-alanine + ATP = D-alanyl-D-alanine + ADP + phosphate + H(+). The protein operates within cell wall biogenesis; peptidoglycan biosynthesis. Functionally, cell wall formation. This Desulfovibrio desulfuricans (strain ATCC 27774 / DSM 6949 / MB) protein is D-alanine--D-alanine ligase.